A 403-amino-acid polypeptide reads, in one-letter code: MTIAPMANDLEDFESLLEPDFDAKQFGNDLLKATNNNDTTILDLNTPLKKLNYDLHEIDSRIDQLMNSNPLEIIELIYKNEHVNSTIVGELKPSLGYMNMSYDRLKNQVLDPYERARKVQLALSKVYQTSFLLRGALLYIHLSNKLNALSKTAQLSTSTAINLASLHYQLEITLEENKNLKSLRKIKQLDQDIVSPNKRELITFLSLQMCKECLNSIKIKSNKEIISQLAYSLYLLSSQEFESAINKIVLSNVTMSSQILSKILNSIRMFPDAFNEVVEKGYNIYILETLLQNIKTDNVTNSSRSIAANKSRLGNLLSEYTSMKSKAGSGTPRDLFWSKVSSAFKKDFDISVNRGGPVGKSLLKNKDFIINTMKQSMKKSSDNSDYQSYLDVMLNSVSISLNK.

The protein belongs to the COG5 family. Component of the conserved oligomeric Golgi (COG or Sec34/Sec35) complex which consists of eight different proteins COG1-COG8.

The protein resides in the golgi apparatus membrane. Its function is as follows. Acts as a component of the peripheral membrane COG complex that is involved in intra-Golgi protein trafficking. COG is located at the cis-Golgi, and regulates tethering of retrograde intra-Golgi vesicles and possibly a number of other membrane trafficking events. The sequence is that of Conserved oligomeric Golgi complex subunit 5 (COG5) from Saccharomyces cerevisiae (strain ATCC 204508 / S288c) (Baker's yeast).